We begin with the raw amino-acid sequence, 887 residues long: DNA mismatch repair protein MutS (887 aa).

ATP is bound at residue 626–633 (GPNMAGKS).

The protein belongs to the DNA mismatch repair MutS family.

Functionally, this protein is involved in the repair of mismatches in DNA. It is possible that it carries out the mismatch recognition step. This protein has a weak ATPase activity. The sequence is that of DNA mismatch repair protein MutS from Methanococcoides burtonii (strain DSM 6242 / NBRC 107633 / OCM 468 / ACE-M).